A 467-amino-acid polypeptide reads, in one-letter code: Ribulose bisphosphate carboxylase large chain (467 aa).

K5 is subject to N6,N6,N6-trimethyllysine. N114 and T164 together coordinate substrate. K166 acts as the Proton acceptor in catalysis. Residue K168 coordinates substrate. 3 residues coordinate Mg(2+): K192, D194, and E195. K192 is modified (N6-carboxylysine). H285 acts as the Proton acceptor in catalysis. Residues R286, H318, and S370 each contribute to the substrate site.

Belongs to the RuBisCO large chain family. Type I subfamily. In terms of assembly, heterohexadecamer of 8 large chains and 8 small chains; disulfide-linked. The disulfide link is formed within the large subunit homodimers. Requires Mg(2+) as cofactor. In terms of processing, the disulfide bond which can form in the large chain dimeric partners within the hexadecamer appears to be associated with oxidative stress and protein turnover.

Its subcellular location is the plastid. The protein resides in the chloroplast. It catalyses the reaction 2 (2R)-3-phosphoglycerate + 2 H(+) = D-ribulose 1,5-bisphosphate + CO2 + H2O. The enzyme catalyses D-ribulose 1,5-bisphosphate + O2 = 2-phosphoglycolate + (2R)-3-phosphoglycerate + 2 H(+). Its function is as follows. RuBisCO catalyzes two reactions: the carboxylation of D-ribulose 1,5-bisphosphate, the primary event in carbon dioxide fixation, as well as the oxidative fragmentation of the pentose substrate in the photorespiration process. Both reactions occur simultaneously and in competition at the same active site. This chain is Ribulose bisphosphate carboxylase large chain, found in Hydrophyllum virginianum (Eastern waterleaf).